The following is a 152-amino-acid chain: Xanthine-guanine phosphoribosyltransferase (152 aa).

Residues 37 to 38, Arg-69, and 88 to 96 each bind 5-phospho-alpha-D-ribose 1-diphosphate; these read RG and DDLVDSGDT. Arg-69 lines the GMP pocket. Asp-89 serves as a coordination point for Mg(2+). Guanine is bound by residues Asp-92 and Ile-135. Residues Asp-92 and Ile-135 each contribute to the xanthine site. Residues 92-96 and 134-135 each bind GMP; these read DSGDT and WI.

The protein belongs to the purine/pyrimidine phosphoribosyltransferase family. XGPT subfamily. As to quaternary structure, homotetramer. Mg(2+) is required as a cofactor.

It is found in the cell inner membrane. It carries out the reaction GMP + diphosphate = guanine + 5-phospho-alpha-D-ribose 1-diphosphate. The enzyme catalyses XMP + diphosphate = xanthine + 5-phospho-alpha-D-ribose 1-diphosphate. The catalysed reaction is IMP + diphosphate = hypoxanthine + 5-phospho-alpha-D-ribose 1-diphosphate. It participates in purine metabolism; GMP biosynthesis via salvage pathway; GMP from guanine: step 1/1. The protein operates within purine metabolism; XMP biosynthesis via salvage pathway; XMP from xanthine: step 1/1. Its function is as follows. Purine salvage pathway enzyme that catalyzes the transfer of the ribosyl-5-phosphate group from 5-phospho-alpha-D-ribose 1-diphosphate (PRPP) to the N9 position of the 6-oxopurines guanine and xanthine to form the corresponding ribonucleotides GMP (guanosine 5'-monophosphate) and XMP (xanthosine 5'-monophosphate), with the release of PPi. To a lesser extent, also acts on hypoxanthine. This is Xanthine-guanine phosphoribosyltransferase from Aliivibrio salmonicida (strain LFI1238) (Vibrio salmonicida (strain LFI1238)).